The sequence spans 422 residues: Serine--tRNA ligase (422 aa).

Position 226–228 (226–228 (TSE)) interacts with L-serine. ATP is bound by residues 257-259 (RRE) and valine 273. Residue glutamate 280 coordinates L-serine. 344 to 347 (ELTS) is a binding site for ATP. Threonine 379 is an L-serine binding site.

Belongs to the class-II aminoacyl-tRNA synthetase family. Type-1 seryl-tRNA synthetase subfamily. As to quaternary structure, homodimer. The tRNA molecule binds across the dimer.

It localises to the cytoplasm. The enzyme catalyses tRNA(Ser) + L-serine + ATP = L-seryl-tRNA(Ser) + AMP + diphosphate + H(+). It carries out the reaction tRNA(Sec) + L-serine + ATP = L-seryl-tRNA(Sec) + AMP + diphosphate + H(+). Its pathway is aminoacyl-tRNA biosynthesis; selenocysteinyl-tRNA(Sec) biosynthesis; L-seryl-tRNA(Sec) from L-serine and tRNA(Sec): step 1/1. In terms of biological role, catalyzes the attachment of serine to tRNA(Ser). Is also able to aminoacylate tRNA(Sec) with serine, to form the misacylated tRNA L-seryl-tRNA(Sec), which will be further converted into selenocysteinyl-tRNA(Sec). The polypeptide is Serine--tRNA ligase (Corynebacterium glutamicum (strain ATCC 13032 / DSM 20300 / JCM 1318 / BCRC 11384 / CCUG 27702 / LMG 3730 / NBRC 12168 / NCIMB 10025 / NRRL B-2784 / 534)).